The chain runs to 212 residues: Cytidylate kinase (212 aa).

Gly7–Thr15 lines the ATP pocket.

Belongs to the cytidylate kinase family. Type 1 subfamily.

It is found in the cytoplasm. The enzyme catalyses CMP + ATP = CDP + ADP. The catalysed reaction is dCMP + ATP = dCDP + ADP. The polypeptide is Cytidylate kinase (Rhodopseudomonas palustris (strain HaA2)).